Consider the following 198-residue polypeptide: Holliday junction resolvase RecU (198 aa).

The disordered stretch occupies residues 1-22 (MVNYPHKVSSQKRQTSLSQPKN). Polar residues predominate over residues 11–22 (QKRQTSLSQPKN). Mg(2+) contacts are provided by threonine 81, aspartate 83, glutamate 96, and glutamine 115.

This sequence belongs to the RecU family. It depends on Mg(2+) as a cofactor.

The protein localises to the cytoplasm. It catalyses the reaction Endonucleolytic cleavage at a junction such as a reciprocal single-stranded crossover between two homologous DNA duplexes (Holliday junction).. Functionally, endonuclease that resolves Holliday junction intermediates in genetic recombination. Cleaves mobile four-strand junctions by introducing symmetrical nicks in paired strands. Promotes annealing of linear ssDNA with homologous dsDNA. Required for DNA repair, homologous recombination and chromosome segregation. The protein is Holliday junction resolvase RecU of Streptococcus pneumoniae (strain P1031).